The chain runs to 316 residues: Acetylglutamate kinase (316 aa).

Substrate contacts are provided by residues G76–G77, R98, and N207.

The protein belongs to the acetylglutamate kinase family. ArgB subfamily.

It is found in the cytoplasm. The catalysed reaction is N-acetyl-L-glutamate + ATP = N-acetyl-L-glutamyl 5-phosphate + ADP. It participates in amino-acid biosynthesis; L-arginine biosynthesis; N(2)-acetyl-L-ornithine from L-glutamate: step 2/4. In terms of biological role, catalyzes the ATP-dependent phosphorylation of N-acetyl-L-glutamate. This is Acetylglutamate kinase from Paenarthrobacter aurescens (strain TC1).